Reading from the N-terminus, the 877-residue chain is GTPase activating protein homolog 2 (877 aa).

Positions 14-285 (FKFTDNLWDG…SVEMIDITND (272 aa)) constitute an F-BAR domain. Residues 130-214 (QEGIKLKQDM…SNCDEEYREQ (85 aa)) adopt a coiled-coil conformation. The Rho-GAP domain occupies 374–560 (VSLDELMNRQ…TLIKQIPPPL (187 aa)). 3 disordered regions span residues 589 to 612 (DQLS…GSGS), 644 to 704 (LPPL…AEPT), and 749 to 800 (AATP…LAST). Composition is skewed to low complexity over residues 593–612 (NDDN…GSGS), 653–676 (SGSG…SPTT), and 749–779 (AATP…STST). Positions 780-800 (IKTSSPDRTTPLTSSPPLAST) are enriched in polar residues.

Its subcellular location is the cytoplasm. It is found in the contractile vacuole. In terms of biological role, rho GTPase-activating protein involved in the signal transduction pathway. Regulator of the contractile vacuole network as well as involved in driving vacuole emptying. The polypeptide is GTPase activating protein homolog 2 (mgp2) (Dictyostelium discoideum (Social amoeba)).